A 694-amino-acid chain; its full sequence is Rabphilin-3A (694 aa).

The span at 1–12 shows a compositional bias: polar residues; it reads MTDTVFSNSSNR. Positions 1-51 are disordered; it reads MTDTVFSNSSNRWMYPSDRPLQSNDKEQLQAGWSVHPGGQPDRQRKQEELT. The 117-residue stretch at 44 to 160 folds into the RabBD domain; it reads QRKQEELTDE…KRSGAWFFKG (117 aa). An FYVE-type zinc finger spans residues 92 to 148; sequence GDGVNRCILCGEQLGMLGSACVVCEDCKKNVCTKCGVETNNRLHSVWLCKICIEQRE. Residues Cys98, Cys101, Cys115, Cys118, Cys123, Cys126, Cys140, and Cys143 each coordinate Zn(2+). The segment at 166-388 is disordered; that stretch reads LPQPMPIKKT…EEEANSYDSD (223 aa). Over residues 177–186 the composition is skewed to low complexity; sequence PQQPVSEPAA. Basic and acidic residues predominate over residues 202–211; that stretch reads ARGDSEDRRG. Arg226 carries the omega-N-methylarginine modification. Residue Ser272 is modified to Phosphoserine. Low complexity predominate over residues 352-370; that stretch reads PSGPYSQASAAAPQPAAAR. Acidic residues predominate over residues 375–388; sequence PEEEEEEANSYDSD. Positions 392–514 constitute a C2 1 domain; it reads TLGALEFSLL…KPNQRKNFNI (123 aa). Ca(2+) is bound by residues Met422, Asp423, Asp429, Asp484, Glu485, Asp486, Glu492, Glu539, Asp581, Asp587, Asp641, Tyr642, Asp643, and Asp649. Positions 550 to 683 constitute a C2 2 domain; that stretch reads ERGKILVSLM…NKDKKIERWH (134 aa). Phosphoserine is present on residues Ser692 and Ser693.

In terms of assembly, interacts with RAB3B, RAB3C, RAB3D, RAB8A, RAB27A and RAB27B. Interacts with RAB3A; this interaction recruits RPH3A to synaptic vesicules. Interacts (via C2B domain) with SNAP25. Interacts with deubiquitinating enzyme CAND1; this interaction results in the deubiquitination of RPH3A. Interacts with GRIN2A and DLG4; this ternary complex regulates NMDA receptor composition at postsynaptic membranes. Interacts with SNCA. Ca(2+) serves as cofactor. Post-translationally, ubiquitinated. Deubiquitinated by CAND1 to prevent its degradation.

It localises to the cytoplasmic vesicle. It is found in the secretory vesicle. Its subcellular location is the synaptic vesicle membrane. The protein localises to the cell projection. The protein resides in the dendritic spine. It localises to the postsynaptic cell membrane. It is found in the membrane. Its function is as follows. Plays an essential role in docking and fusion steps of regulated exocytosis. At the presynaptic level, RPH3A is recruited by RAB3A to the synaptic vesicle membrane in a GTP-dependent manner where it modulates synaptic vesicle trafficking and calcium-triggered neurotransmitter release. In the post-synaptic compartment, forms a ternary complex with GRIN2A and DLG4 and regulates NMDA receptor stability. Also plays a role in the exocytosis of arginine vasopressin hormone. The sequence is that of Rabphilin-3A (RPH3A) from Homo sapiens (Human).